A 689-amino-acid chain; its full sequence is Glycine--tRNA ligase beta subunit (689 aa).

The protein belongs to the class-II aminoacyl-tRNA synthetase family. Tetramer of two alpha and two beta subunits.

The protein localises to the cytoplasm. The catalysed reaction is tRNA(Gly) + glycine + ATP = glycyl-tRNA(Gly) + AMP + diphosphate. The polypeptide is Glycine--tRNA ligase beta subunit (Escherichia coli O8 (strain IAI1)).